The following is a 190-amino-acid chain: Cancer-related nucleoside-triphosphatase homolog (190 aa).

Residues 9-16 (GPPGVGKT) and 109-116 (VCIIDEIG) each bind ATP. Lys-165 bears the N6-acetyllysine mark.

It belongs to the THEP1 NTPase family. As to quaternary structure, monomer.

The enzyme catalyses a ribonucleoside 5'-triphosphate + H2O = a ribonucleoside 5'-diphosphate + phosphate + H(+). The catalysed reaction is 5-methyl-UTP + H2O = 5-methyl-UDP + phosphate + H(+). It carries out the reaction CTP + H2O = CDP + phosphate + H(+). It catalyses the reaction ATP + H2O = ADP + phosphate + H(+). The enzyme catalyses GTP + H2O = GDP + phosphate + H(+). In terms of biological role, has nucleotide phosphatase activity towards ATP, GTP, CTP, TTP and UTP. Hydrolyzes nucleoside diphosphates with lower efficiency. The sequence is that of Cancer-related nucleoside-triphosphatase homolog from Mus musculus (Mouse).